Here is a 122-residue protein sequence, read N- to C-terminus: Large ribosomal subunit protein uL14 (122 aa).

Belongs to the universal ribosomal protein uL14 family. Part of the 50S ribosomal subunit. Forms a cluster with proteins L3 and L19. In the 70S ribosome, L14 and L19 interact and together make contacts with the 16S rRNA in bridges B5 and B8.

In terms of biological role, binds to 23S rRNA. Forms part of two intersubunit bridges in the 70S ribosome. The protein is Large ribosomal subunit protein uL14 of Ureaplasma parvum serovar 3 (strain ATCC 27815 / 27 / NCTC 11736).